Consider the following 81-residue polypeptide: Photosystem I iron-sulfur center (81 aa).

4Fe-4S ferredoxin-type domains follow at residues 2–31 (SHAVKIYDTCIGCTQCVRACPLDVLEMVPW) and 39–68 (IASSPRTEDCVGCKRCETACPTDFLSIRVY). The [4Fe-4S] cluster site is built by cysteine 11, cysteine 14, cysteine 17, cysteine 21, cysteine 48, cysteine 51, cysteine 54, and cysteine 58.

As to quaternary structure, the cyanobacterial PSI reaction center is composed of one copy each of PsaA,B,C,D,E,F,I,J,K,L,M and X, and forms trimeric complexes. [4Fe-4S] cluster serves as cofactor.

It is found in the cellular thylakoid membrane. The catalysed reaction is reduced [plastocyanin] + hnu + oxidized [2Fe-2S]-[ferredoxin] = oxidized [plastocyanin] + reduced [2Fe-2S]-[ferredoxin]. Apoprotein for the two 4Fe-4S centers FA and FB of photosystem I (PSI); essential for photochemical activity. FB is the terminal electron acceptor of PSI, donating electrons to ferredoxin. The C-terminus interacts with PsaA/B/D and helps assemble the protein into the PSI complex. Required for binding of PsaD and PsaE to PSI. PSI is a plastocyanin/cytochrome c6-ferredoxin oxidoreductase, converting photonic excitation into a charge separation, which transfers an electron from the donor P700 chlorophyll pair to the spectroscopically characterized acceptors A0, A1, FX, FA and FB in turn. The protein is Photosystem I iron-sulfur center of Prochlorococcus marinus (strain MIT 9211).